The chain runs to 360 residues: UPF0496 protein At3g19250 (360 aa).

Residues 1–29 (MPHCFTFKPASPEGSLGDDHLPHPSPEGS) form a disordered region. 2 consecutive transmembrane segments (helical) span residues 205-225 (HHATAGSALCLVTAVVVVAAS) and 229-249 (IAYHALPTILVVAGPLCTPYL).

The protein belongs to the UPF0496 family.

The protein resides in the membrane. This chain is UPF0496 protein At3g19250, found in Arabidopsis thaliana (Mouse-ear cress).